The sequence spans 384 residues: Guanine nucleotide-binding protein alpha-1 subunit (384 aa).

Residues 1–22 are disordered; the sequence is MGSLCSRNKHYSQADDEENTQT. Glycine 2 carries the N-myristoyl glycine lipid modification. A lipid anchor (S-palmitoyl cysteine) is attached at cysteine 5. Residues 38 to 384 enclose the G-alpha domain; that stretch reads HIQKLLLLGA…RRNLFEAGLL (347 aa). The interval 41–54 is G1 motif; that stretch reads KLLLLGAGDSGKST. GTP is bound by residues aspartate 49, serine 50, glycine 51, lysine 52, serine 53, threonine 54, aspartate 163, leucine 188, threonine 194, glycine 222, asparagine 288, lysine 289, aspartate 291, and alanine 356. Position 53 (serine 53) interacts with Mg(2+). Positions 186–194 are G2 motif; that stretch reads DVLFARIRT. A Mg(2+)-binding site is contributed by threonine 194. The G3 motif stretch occupies residues 215–224; that stretch reads YRLFDVGGQR. The interval 284–291 is G4 motif; that stretch reads MLFLNKFD. A G5 motif region spans residues 354 to 359; that stretch reads TTALDQ.

This sequence belongs to the G-alpha family. G proteins are composed of 3 units; alpha, beta and gamma. The alpha chain contains the guanine nucleotide binding site. The cofactor is Mg(2+).

Its function is as follows. Guanine nucleotide-binding proteins (G proteins) are involved as modulators or transducers in various transmembrane signaling systems. The sequence is that of Guanine nucleotide-binding protein alpha-1 subunit (GPA1) from Solanum tuberosum (Potato).